The primary structure comprises 95 residues: Small ribosomal subunit protein bS6 (95 aa).

The protein belongs to the bacterial ribosomal protein bS6 family.

In terms of biological role, binds together with bS18 to 16S ribosomal RNA. This is Small ribosomal subunit protein bS6 from Exiguobacterium sibiricum (strain DSM 17290 / CCUG 55495 / CIP 109462 / JCM 13490 / 255-15).